Reading from the N-terminus, the 298-residue chain is Homoserine kinase (298 aa).

Residue 83–93 (PISRGLGSSSS) participates in ATP binding.

Belongs to the GHMP kinase family. Homoserine kinase subfamily.

It localises to the cytoplasm. It catalyses the reaction L-homoserine + ATP = O-phospho-L-homoserine + ADP + H(+). Its pathway is amino-acid biosynthesis; L-threonine biosynthesis; L-threonine from L-aspartate: step 4/5. Catalyzes the ATP-dependent phosphorylation of L-homoserine to L-homoserine phosphate. In Clostridium botulinum (strain Alaska E43 / Type E3), this protein is Homoserine kinase.